A 404-amino-acid polypeptide reads, in one-letter code: Protein IQ-DOMAIN 12 (404 aa).

The tract at residues 8 to 25 (FGWMKRLFICEAKARAEK) is calmodulin-binding. The Nuclear localization signal 1 motif lies at 11–18 (MKRLFICE). 2 consecutive IQ domains span residues 108–135 (NVAA…ALVR) and 136–158 (LQAI…SSHS). The Nuclear localization signal 2 motif lies at 226–233 (IKRDRMLK).

It belongs to the IQD family. In terms of assembly, binds to multiple calmodulin (CaM) in the presence of Ca(2+) and CaM-like proteins.

It localises to the nucleus. Its subcellular location is the cell membrane. May be involved in cooperative interactions with calmodulins or calmodulin-like proteins. Recruits calmodulin proteins to microtubules, thus being a potential scaffold in cellular signaling and trafficking. May associate with nucleic acids and regulate gene expression at the transcriptional or post-transcriptional level. The polypeptide is Protein IQ-DOMAIN 12 (Arabidopsis thaliana (Mouse-ear cress)).